We begin with the raw amino-acid sequence, 347 residues long: Protein YIPF3 (347 aa).

Positions 1–31 (MATPAAPASGVRNGAGPEWGGFEENIQGGGS) are disordered. At Ala-2 the chain carries N-acetylalanine; in Protein YIPF3, N-terminally processed. Residues 2–145 (ATPAAPASGV…PIKMVNFPQK (144 aa)) lie on the Cytoplasmic side of the membrane. The helical transmembrane segment at 146–166 (VAGELYGPLMLVFTLVAILLH) threads the bilayer. Topologically, residues 167–184 (GMKTSDTIIREGTLMGTA) are lumenal. The helical transmembrane segment at 185–205 (IGTCFGYWLGVSSFIYFLAYL) threads the bilayer. Over 206-211 (CNAQIT) the chain is Cytoplasmic. The helical transmembrane segment at 212-234 (MLQMLALLGYGLFGHCIVLFITY) threads the bilayer. Residues 235–237 (NIH) lie on the Lumenal side of the membrane. Residues 238-260 (LHALFYLFWLLVGGLSTLRMVAV) traverse the membrane as a helical segment. At 261–271 (LVSRTVGPTQR) the chain is on the cytoplasmic side. Residues 272 to 292 (LLLCGTLAALHMLFLLYLHFA) traverse the membrane as a helical segment. Residues 293 to 347 (YHKVVEGILDTLEGPNIPPMQRVPRDIPAVLPAARLPVAVINATAKAIAVTLQSH) are Lumenal-facing. Asn-334 carries N-linked (GlcNAc...) asparagine glycosylation.

The protein belongs to the YIP1 family. Interacts with YIPF4 and YIPF5. In terms of tissue distribution, expressed by splenocytes (at protein level).

It localises to the cell membrane. The protein resides in the golgi apparatus. It is found in the cis-Golgi network membrane. Its subcellular location is the cytoplasm. Its function is as follows. Involved in the maintenance of the Golgi structure. May play a role in hematopoiesis. The chain is Protein YIPF3 (Yipf3) from Mus musculus (Mouse).